We begin with the raw amino-acid sequence, 273 residues long: Eukaryotic translation initiation factor 3 subunit G-2 (273 aa).

Positions 193–271 constitute an RRM domain; that stretch reads SAVRISNLSE…LILCVEWSKP (79 aa).

This sequence belongs to the eIF-3 subunit G family. In terms of assembly, component of the eukaryotic translation initiation factor 3 (eIF-3) complex. The eIF-3 complex interacts with pix.

Its subcellular location is the cytoplasm. Its function is as follows. RNA-binding component of the eukaryotic translation initiation factor 3 (eIF-3) complex, which is involved in protein synthesis of a specialized repertoire of mRNAs and, together with other initiation factors, stimulates binding of mRNA and methionyl-tRNAi to the 40S ribosome. The eIF-3 complex specifically targets and initiates translation of a subset of mRNAs involved in cell proliferation. This subunit can bind 18S rRNA. The protein is Eukaryotic translation initiation factor 3 subunit G-2 of Drosophila simulans (Fruit fly).